The following is a 25-amino-acid chain: Small ribosomal subunit protein eS32B (25 aa).

A disordered region spans residues 1 to 25; the sequence is MRAKWRKKRTRRLKRKRRKVRARSK.

Belongs to the eukaryotic ribosomal protein eS32 family. As to quaternary structure, component of the small ribosomal subunit (SSU). Mature yeast ribosomes consist of a small (40S) and a large (60S) subunit. The 40S small subunit contains 1 molecule of ribosomal RNA (18S rRNA) and 33 different proteins (encoded by 57 genes). The large 60S subunit contains 3 rRNA molecules (25S, 5.8S and 5S rRNA) and 46 different proteins (encoded by 81 genes).

It localises to the cytoplasm. Component of the ribosome, a large ribonucleoprotein complex responsible for the synthesis of proteins in the cell. The small ribosomal subunit (SSU) binds messenger RNAs (mRNAs) and translates the encoded message by selecting cognate aminoacyl-transfer RNA (tRNA) molecules. The large subunit (LSU) contains the ribosomal catalytic site termed the peptidyl transferase center (PTC), which catalyzes the formation of peptide bonds, thereby polymerizing the amino acids delivered by tRNAs into a polypeptide chain. The nascent polypeptides leave the ribosome through a tunnel in the LSU and interact with protein factors that function in enzymatic processing, targeting, and the membrane insertion of nascent chains at the exit of the ribosomal tunnel. The polypeptide is Small ribosomal subunit protein eS32B (Saccharomyces cerevisiae (strain ATCC 204508 / S288c) (Baker's yeast)).